A 371-amino-acid chain; its full sequence is MDVSEGGVTVSVPTASGGGEGAADDVFFNATQELNRDLTVATLAAFREREPRAASYLDAMTASGIRGVRAANAGWDVTMADVDADAVELATSNLARNGLDGEVVARDANSLLHDHDRVLDVVDIDPFGSPMPFADAAFANARNLVCVTATDTAPLCGAHFESGVRKYSATPRNTNYHAEMGLRILLGALARTAARYDVGVTPILSHVSDHYVRTYLELDHRATDANAAVEQVGHVYHCQQCLSRDHEYGLVAAPRAECPRCGGHQVLTAGPLWLGPAHEEAFAASVREQLTREMGEASQAFHLLQTIEGELHEPTHYDQHRLYSQWGEPAVGMAEFLDQLRDAGLRASRTHFGGTTFKTDGGLAEVEAAVL.

Residues 1–370 form the Trm1 methyltransferase domain; it reads MDVSEGGVTV…GGLAEVEAAV (370 aa). The S-adenosyl-L-methionine site is built by R36, R66, D81, D107, and A108. Residues C238, C241, C258, and C261 each coordinate Zn(2+).

The protein belongs to the class I-like SAM-binding methyltransferase superfamily. Trm1 family.

The catalysed reaction is guanosine(26) in tRNA + 2 S-adenosyl-L-methionine = N(2)-dimethylguanosine(26) in tRNA + 2 S-adenosyl-L-homocysteine + 2 H(+). Dimethylates a single guanine residue at position 26 of a number of tRNAs using S-adenosyl-L-methionine as donor of the methyl groups. The polypeptide is tRNA (guanine(26)-N(2))-dimethyltransferase (Halobacterium salinarum (strain ATCC 700922 / JCM 11081 / NRC-1) (Halobacterium halobium)).